A 340-amino-acid polypeptide reads, in one-letter code: Flap endonuclease 1 (340 aa).

The tract at residues 1–98 (MGLNLKDLVV…AEIERRKQIK (98 aa)) is N-domain. Residues aspartate 27, aspartate 80, glutamate 152, glutamate 154, aspartate 173, aspartate 175, and aspartate 236 each contribute to the Mg(2+) site. The I-domain stretch occupies residues 116 to 258 (DARKYAQQTT…TALKMIKQHS (143 aa)).

It belongs to the XPG/RAD2 endonuclease family. FEN1 subfamily. Interacts with PCNA. PCNA stimulates the nuclease activity without altering cleavage specificity. Mg(2+) is required as a cofactor.

Functionally, structure-specific nuclease with 5'-flap endonuclease and 5'-3' exonuclease activities involved in DNA replication and repair. During DNA replication, cleaves the 5'-overhanging flap structure that is generated by displacement synthesis when DNA polymerase encounters the 5'-end of a downstream Okazaki fragment. Binds the unpaired 3'-DNA end and kinks the DNA to facilitate 5' cleavage specificity. Cleaves one nucleotide into the double-stranded DNA from the junction in flap DNA, leaving a nick for ligation. Also involved in the base excision repair (BER) pathway. Acts as a genome stabilization factor that prevents flaps from equilibrating into structures that lead to duplications and deletions. Also possesses 5'-3' exonuclease activity on nicked or gapped double-stranded DNA. In Nitrosopumilus maritimus (strain SCM1), this protein is Flap endonuclease 1.